The chain runs to 685 residues: Putative mannosyltransferase YycA (685 aa).

6 consecutive transmembrane segments (helical) span residues 6–26 (FDAA…YHIW), 68–88 (VLWI…SVII), 109–129 (FGVG…IAVA), 154–174 (AVKQ…GLAF), 176–196 (MKMM…LIAS), and 204–224 (IGSL…WAIA). The segment at 269 to 347 (MNAAGGGNMQ…GGGGGKSVNM (79 aa)) is disordered. The segment covering 277–286 (MQNQDNMQAP) has biased composition (polar residues). The segment covering 287-303 (NGNGSSFSQNGNQSFGN) has biased composition (low complexity). A compositionally biased stretch (gly residues) spans 318–343 (LNGGGGTPPTGGNGPGNGGPGGGGGK). Helical transmembrane passes span 363 to 383 (LSGQ…GAII), 399 to 419 (TLFW…AGFF), 422 to 442 (YYLI…WYTM), 455 to 475 (YLLP…LSAY), 479 to 499 (IGSV…LALL), 513 to 533 (IISL…PLLY), and 573 to 593 (TGEE…YIIY). The segment at 652–685 (TSDEYSGSSSSTNSVQGMRRGPGGESQQTLYLVE) is disordered. Residues 654–665 (DEYSGSSSSTNS) show a composition bias toward low complexity. Residues 676–685 (ESQQTLYLVE) are compositionally biased toward polar residues.

Belongs to the glycosyltransferase 39 family.

The protein resides in the cell membrane. The sequence is that of Putative mannosyltransferase YycA (yycA) from Bacillus subtilis (strain 168).